Reading from the N-terminus, the 357-residue chain is Phenylalanine--tRNA ligase alpha subunit (357 aa).

Mg(2+) is bound at residue E257.

Belongs to the class-II aminoacyl-tRNA synthetase family. Phe-tRNA synthetase alpha subunit type 1 subfamily. In terms of assembly, tetramer of two alpha and two beta subunits. Mg(2+) is required as a cofactor.

The protein resides in the cytoplasm. It carries out the reaction tRNA(Phe) + L-phenylalanine + ATP = L-phenylalanyl-tRNA(Phe) + AMP + diphosphate + H(+). The protein is Phenylalanine--tRNA ligase alpha subunit of Ruegeria sp. (strain TM1040) (Silicibacter sp.).